Here is a 370-residue protein sequence, read N- to C-terminus: Quinolinate synthase (370 aa).

Positions 62 and 83 each coordinate iminosuccinate. Residue cysteine 128 participates in [4Fe-4S] cluster binding. Iminosuccinate contacts are provided by residues 154–156 and serine 171; that span reads YAN. Cysteine 215 is a binding site for [4Fe-4S] cluster. Iminosuccinate contacts are provided by residues 241–243 and threonine 258; that span reads HPE. Residue cysteine 312 coordinates [4Fe-4S] cluster.

Belongs to the quinolinate synthase family. Type 1 subfamily. The cofactor is [4Fe-4S] cluster.

The protein localises to the cytoplasm. It catalyses the reaction iminosuccinate + dihydroxyacetone phosphate = quinolinate + phosphate + 2 H2O + H(+). The protein operates within cofactor biosynthesis; NAD(+) biosynthesis; quinolinate from iminoaspartate: step 1/1. Its function is as follows. Catalyzes the condensation of iminoaspartate with dihydroxyacetone phosphate to form quinolinate. The protein is Quinolinate synthase of Neisseria meningitidis serogroup A / serotype 4A (strain DSM 15465 / Z2491).